The sequence spans 848 residues: ATP-dependent Clp protease ATP-binding subunit ClpC1 (848 aa).

The Clp R domain maps to 2–144; the sequence is FERFTDRARK…RQQVIQLLSG (143 aa). 2 repeat regions span residues 5–70 and 80–144; these read FTDR…IGQG and FTPR…LLSG. The tract at residues 171–418 is i; the sequence is LDQFGRNLTA…RMRIRRMTAP (248 aa). 216-223 lines the ATP pocket; that stretch reads GEPGVGKT. One can recognise a UVR domain in the interval 425–460; the sequence is DEKIAEARREKESAIDAQDFEKAASLRDREKTLVAQ. An II region spans residues 479 to 670; it reads VDDEQIAEVL…VLIFTSNLGT (192 aa). An ATP-binding site is contributed by 553–560; sequence GPSGVGKT. Residues 821–848 form a disordered region; it reads TGTRKPPAEPDLAKAGAHSAGGPEPAAR.

This sequence belongs to the ClpA/ClpB family. ClpC subfamily.

In terms of biological role, ATP-dependent specificity component of the Clp protease. It directs the protease to specific substrates. Can perform chaperone functions in the absence of ClpP. The protein is ATP-dependent Clp protease ATP-binding subunit ClpC1 (clpC1) of Mycobacterium tuberculosis (strain CDC 1551 / Oshkosh).